A 154-amino-acid polypeptide reads, in one-letter code: MADVEVETEVAAGAQPKKRTFRKYSYRGVDLDALLDMSTDDLVQLFPARARRRFQRGLKRKPMALIKKLRKAKKDAPAGEKPEPVRTHLRNMIIVPEMIGSIVGVYNGKTFNQVEIKPEMIGHYLAEFSISYKPVKHGRPGIGATHSSRFIPLK.

This sequence belongs to the universal ribosomal protein uS19 family.

The chain is Small ribosomal subunit protein uS19 (RPS15) from Oryza sativa subsp. japonica (Rice).